Consider the following 406-residue polypeptide: Acetylornithine aminotransferase (406 aa).

Residues 108–109 and F141 contribute to the pyridoxal 5'-phosphate site; that span reads GA. R144 lines the N(2)-acetyl-L-ornithine pocket. Residue 226-229 coordinates pyridoxal 5'-phosphate; it reads DEVQ. K255 carries the post-translational modification N6-(pyridoxal phosphate)lysine. T283 lines the N(2)-acetyl-L-ornithine pocket. Residue T284 participates in pyridoxal 5'-phosphate binding.

The protein belongs to the class-III pyridoxal-phosphate-dependent aminotransferase family. ArgD subfamily. In terms of assembly, homodimer. Requires pyridoxal 5'-phosphate as cofactor.

It localises to the cytoplasm. The enzyme catalyses N(2)-acetyl-L-ornithine + 2-oxoglutarate = N-acetyl-L-glutamate 5-semialdehyde + L-glutamate. It participates in amino-acid biosynthesis; L-arginine biosynthesis; N(2)-acetyl-L-ornithine from L-glutamate: step 4/4. This Pseudomonas putida (strain ATCC 47054 / DSM 6125 / CFBP 8728 / NCIMB 11950 / KT2440) protein is Acetylornithine aminotransferase.